The primary structure comprises 55 residues: ATP synthase protein 8 (55 aa).

A helical transmembrane segment spans residues W8–L28. Positions N34–L55 are disordered. The span at S39 to L55 shows a compositional bias: low complexity.

This sequence belongs to the ATPase protein 8 family. F-type ATPases have 2 components, CF(1) - the catalytic core - and CF(0) - the membrane proton channel.

The protein localises to the mitochondrion membrane. Functionally, mitochondrial membrane ATP synthase (F(1)F(0) ATP synthase or Complex V) produces ATP from ADP in the presence of a proton gradient across the membrane which is generated by electron transport complexes of the respiratory chain. F-type ATPases consist of two structural domains, F(1) - containing the extramembraneous catalytic core and F(0) - containing the membrane proton channel, linked together by a central stalk and a peripheral stalk. During catalysis, ATP synthesis in the catalytic domain of F(1) is coupled via a rotary mechanism of the central stalk subunits to proton translocation. Part of the complex F(0) domain. Minor subunit located with subunit a in the membrane. This is ATP synthase protein 8 (MT-ATP8) from Strongylocentrotus purpuratus (Purple sea urchin).